The primary structure comprises 1372 residues: DNA-directed RNA polymerase subunit beta (1372 aa).

Belongs to the RNA polymerase beta chain family. In terms of assembly, the RNAP catalytic core consists of 2 alpha, 1 beta, 1 beta' and 1 omega subunit. When a sigma factor is associated with the core the holoenzyme is formed, which can initiate transcription.

The catalysed reaction is RNA(n) + a ribonucleoside 5'-triphosphate = RNA(n+1) + diphosphate. In terms of biological role, DNA-dependent RNA polymerase catalyzes the transcription of DNA into RNA using the four ribonucleoside triphosphates as substrates. The sequence is that of DNA-directed RNA polymerase subunit beta from Nitratidesulfovibrio vulgaris (strain DP4) (Desulfovibrio vulgaris).